A 416-amino-acid polypeptide reads, in one-letter code: Fusaric acid cluster transcription factor FUB10 (416 aa).

The zn(2)-C6 fungal-type DNA-binding region spans 16–47 (CDRCRAQKLRCHRDSGHSTDACLRCLKSGIEC). The interval 50–92 (SKARPTGRPPSRQVQPTVSVEQGDTSSSSHTTDSSPSAGGTDI) is disordered. Over residues 61-73 (RQVQPTVSVEQGD) the composition is skewed to polar residues. Over residues 74 to 86 (TSSSSHTTDSSPS) the composition is skewed to low complexity.

It is found in the nucleus. In terms of biological role, transcription factor that regulates the expression of the gene cluster that mediates the biosynthesis of fusaric acid, a mycotoxin with low to moderate toxicity to animals and humans, but with high phytotoxic properties. This Fusarium oxysporum f. sp. lycopersici (strain 4287 / CBS 123668 / FGSC 9935 / NRRL 34936) (Fusarium vascular wilt of tomato) protein is Fusaric acid cluster transcription factor FUB10.